Reading from the N-terminus, the 299-residue chain is Ig alpha chain C region (299 aa).

Ig-like domains follow at residues 71 to 167 (PSLS…ATIS) and 174 to 276 (PQVH…KTID).

Its function is as follows. Ig alpha is the major immunoglobulin class in body secretions. It may serve both to defend against local infection and to prevent access of foreign antigens to the general immunologic system. The protein is Ig alpha chain C region of Oryctolagus cuniculus (Rabbit).